The chain runs to 188 residues: M-phase phosphoprotein 6 homolog (188 aa).

The tract at residues 93–188 (EENVDEKDVS…NKNKKKKKRN (96 aa)) is disordered. The span at 120–149 (LTERERRKQELVSKKAEASRKMEVKAPAKE) shows a compositional bias: basic and acidic residues. Phosphoserine is present on Ser-167. Basic residues predominate over residues 174–188 (RKTKKNKNKKKKKRN).

This sequence belongs to the MPP6 family. In terms of assembly, associates with the RNA exosome complex.

The protein resides in the nucleus. RNA-binding protein that associates with the RNA exosome complex. This is M-phase phosphoprotein 6 homolog from Schizosaccharomyces pombe (strain 972 / ATCC 24843) (Fission yeast).